Consider the following 698-residue polypeptide: Ion-translocating oxidoreductase complex subunit C (698 aa).

4Fe-4S ferredoxin-type domains lie at 366–397 and 407–436; these read TEMG…QQLY and KARN…VQYY. [4Fe-4S] cluster contacts are provided by Cys-377, Cys-380, Cys-383, Cys-387, Cys-416, Cys-419, Cys-422, and Cys-426.

The protein belongs to the 4Fe4S bacterial-type ferredoxin family. RnfC subfamily. In terms of assembly, the complex is composed of six subunits: RnfA, RnfB, RnfC, RnfD, RnfE and RnfG. [4Fe-4S] cluster serves as cofactor.

Its subcellular location is the cell inner membrane. Functionally, part of a membrane-bound complex that couples electron transfer with translocation of ions across the membrane. In Yersinia pseudotuberculosis serotype O:3 (strain YPIII), this protein is Ion-translocating oxidoreductase complex subunit C.